Reading from the N-terminus, the 245-residue chain is Probable proteasome subunit alpha type-2 (245 aa).

This sequence belongs to the peptidase T1A family. The 26S proteasome consists of a 20S proteasome core and two 19S regulatory subunits. The 20S proteasome core is composed of 28 subunits that are arranged in four stacked rings, resulting in a barrel-shaped structure. The two end rings are each formed by seven alpha subunits, and the two central rings are each formed by seven beta subunits. The catalytic chamber with the active sites is on the inside of the barrel.

Its subcellular location is the cytoplasm. It is found in the nucleus. Its function is as follows. The proteasome is a multicatalytic proteinase complex which is characterized by its ability to cleave peptides with Arg, Phe, Tyr, Leu, and Glu adjacent to the leaving group at neutral or slightly basic pH. The proteasome has an ATP-dependent proteolytic activity. The protein is Probable proteasome subunit alpha type-2 (pre8) of Schizosaccharomyces pombe (strain 972 / ATCC 24843) (Fission yeast).